The sequence spans 368 residues: Left-right determination factor 1 (368 aa).

Residues 1–21 (MPFLWLCWALWALSLVSLREA) form the signal peptide. The propeptide at 22-76 (LTGEQILGSLLQQLQLDQPPVLDKADVEGMVIPSHVRTQYVALLQHSHASRSRGK) is or 135. An N-linked (GlcNAc...) asparagine glycan is attached at asparagine 158. 4 disulfide bridges follow: cysteine 253–cysteine 266, cysteine 265–cysteine 318, cysteine 295–cysteine 353, and cysteine 299–cysteine 355.

This sequence belongs to the TGF-beta family. In terms of processing, the processing of the protein may also occur at the second R-X-X-R site located at AA 132-135. Processing appears to be regulated in a cell-type specific manner.

The protein localises to the secreted. Its function is as follows. Required for left-right axis determination as a regulator of LEFTY2 and NODAL. This chain is Left-right determination factor 1 (Lefty1), found in Mus musculus (Mouse).